The chain runs to 195 residues: Segregation and condensation protein B (195 aa).

A disordered region spans residues 169 to 195 (LEDVAASQENSREAGGRGSIPGHPGEE).

It belongs to the ScpB family. In terms of assembly, homodimer. Homodimerization may be required to stabilize the binding of ScpA to the Smc head domains. Component of a cohesin-like complex composed of ScpA, ScpB and the Smc homodimer, in which ScpA and ScpB bind to the head domain of Smc. The presence of the three proteins is required for the association of the complex with DNA.

It localises to the cytoplasm. In terms of biological role, participates in chromosomal partition during cell division. May act via the formation of a condensin-like complex containing Smc and ScpA that pull DNA away from mid-cell into both cell halves. This Moorella thermoacetica (strain ATCC 39073 / JCM 9320) protein is Segregation and condensation protein B.